The chain runs to 697 residues: Phenylalanine--tRNA ligase beta subunit, chloroplastic (697 aa).

The region spanning 283 to 368 (NISRILFIDK…RIYGFDNFIS (86 aa)) is the B5 domain. 4 residues coordinate Mg(2+): D346, D352, E355, and E356. In terms of domain architecture, FDX-ACB spans 609-697 (SSYPSLTRDI…IDDLLNEYKL (89 aa)).

The protein belongs to the phenylalanyl-tRNA synthetase beta subunit family. Type 1 subfamily. As to quaternary structure, tetramer of two alpha and two beta subunits. Mg(2+) serves as cofactor.

It is found in the plastid. It localises to the chloroplast. It catalyses the reaction tRNA(Phe) + L-phenylalanine + ATP = L-phenylalanyl-tRNA(Phe) + AMP + diphosphate + H(+). The sequence is that of Phenylalanine--tRNA ligase beta subunit, chloroplastic from Gracilaria tenuistipitata var. liui (Red alga).